Here is a 305-residue protein sequence, read N- to C-terminus: Mitochondrial citrate transporter D (305 aa).

Solcar repeat units follow at residues 10–101 (LPFG…WGAF), 111–197 (QTQS…VRAQ), and 211–298 (RNDL…VMDF). The next 6 helical transmembrane spans lie at 16–36 (FIAGAVAGVSEILVMYPLDVV), 78–98 (SAPILMEAPKRATKFAANDSW), 118–137 (LTGATAGATESFVVVPFELV), 176–196 (TLWRHILWNSGYFGCIFQVRA), 208–228 (QQTRNDLIAGTIGGTAGTILN), and 270–291 (LYKGFLPKVLRLGPGGGILLVV).

It belongs to the mitochondrial carrier (TC 2.A.29) family.

The protein resides in the mitochondrion inner membrane. The enzyme catalyses citrate(in) + H(+)(in) = citrate(out) + H(+)(out). Mitochondrial transporter that mediates citrate export from mitochondria to cytoplasm. Both ctpA, ctpB, and ctpD play important roles in citric acid transport across the mitochondrial membrane and function in a redundant manner. In Aspergillus niger (strain ATCC 1015 / CBS 113.46 / FGSC A1144 / LSHB Ac4 / NCTC 3858a / NRRL 328 / USDA 3528.7), this protein is Mitochondrial citrate transporter D.